The sequence spans 636 residues: Polyadenylate-binding protein 1 (636 aa).

The residue at position 1 (Met1) is an N-acetylmethionine. RRM domains lie at 11 to 89, 99 to 175, 191 to 268, and 294 to 370; these read ASLY…WSQR, GNIF…RFKS, TNVY…RAQK, and VNLY…LAQR. The segment at 166–289 is CSDE1-binding; that stretch reads RKVFVGRFKS…FEQMKQDRIT (124 aa). Lys299 carries the N6-methyllysine modification. The residue at position 315 (Ser315) is a Phosphoserine. At Thr319 the chain carries Phosphothreonine. Omega-N-methylarginine is present on residues Arg385, Arg419, Arg432, and Arg436. Omega-N-methylated arginine; by CARM1 is present on residues Arg455 and Arg460. Residues Arg475 and Arg481 each carry the omega-N-methylarginine modification. Arg493 bears the Asymmetric dimethylarginine; alternate mark. Arg493 bears the Dimethylated arginine; alternate mark. Arg493 bears the Omega-N-methylarginine; alternate mark. The residue at position 506 (Arg506) is an Omega-N-methylarginine. N6-acetyllysine is present on Lys512. Arg518 carries the omega-N-methylarginine modification. The 78-residue stretch at 542 to 619 folds into the PABC domain; that stretch reads QEPLTASMLA…AVAVLQAHQA (78 aa).

It belongs to the polyadenylate-binding protein type-1 family. May form homodimers. Component of a multisubunit autoregulatory ribonucleoprotein complex (ARC), at least composed of IGF2BP1, PABPC1 and CSDE1. Directly interacts with IGF2BP1. Part of a complex associated with the FOS mCRD domain and consisting of HNRPD, SYNCRIP, PAIP1 and CSDE1/UNR. Interacts with PAIP1 and PAIP2 (via the PABPC1-interacting motifs PAM1 and PAM2). Interacts with PAIP1 with a 1:1 stoichiometry and with PAIP2 with a 1:2 stoichiometry. The interaction with CSDE1 is direct and RNA-independent. Found in a mRNP complex with YBX2. Interacts with TENT2/GLD2. Identified in the spliceosome C complex. Identified in a mRNP complex, at least composed of DHX9, DDX3X, ELAVL1, HNRNPU, IGF2BP1, ILF3, PABPC1, PCBP2, PTBP2, STAU1, STAU2, SYNCRIP and YBX1. The interaction with DDX3X is direct and RNA-independent. This interaction increases in stressed cells and decreases during cell recovery. Identified in a IGF2BP1-dependent mRNP granule complex containing untranslated mRNAs. Interacts with NXF1/TAP. Interacts with PIWIL1. Interacts with AGO1, AGO2, GSPT1 and GSPT2. Interacts with LARP4B. Interacts (via the second and third RRM domains and the C-terminus) with PAIP2B (via central acidic portion and C-terminus). Forms a complex with LARP1 and SHFL. Interacts with LARP4. Interacts with ZFC3H1 in a RNase-sensitive manner. Interacts with TRIM71 (via NHL repeats) in an RNA-dependent manner. Interacts with TENT5C; the interaction has no effect on TENT5C poly(A) polymerase function. Interacts with G3BP1 and G3BP2. Interacts with ENDOV; the interaction is RNA-dependent and stimulates ENDOV activity. Interacts with UPF1; the interaction is RNA-dependent. Interacts with IGF2BP2 and IGF2BP3. May interact with SETX. Interacts with RBM46. Interacts with PAN3. In terms of processing, phosphorylated by MAPKAPK2. Methylated by CARM1. Arg-493 is dimethylated, probably to asymmetric dimethylarginine.

The protein resides in the cytoplasm. The protein localises to the stress granule. It is found in the nucleus. Its subcellular location is the cell projection. It localises to the lamellipodium. Functionally, binds the poly(A) tail of mRNA, including that of its own transcript, and regulates processes of mRNA metabolism such as pre-mRNA splicing and mRNA stability. Its function in translational initiation regulation can either be enhanced by PAIP1 or repressed by PAIP2. Can probably bind to cytoplasmic RNA sequences other than poly(A) in vivo. Binds to N6-methyladenosine (m6A)-containing mRNAs and contributes to MYC stability by binding to m6A-containing MYC mRNAs. Involved in translationally coupled mRNA turnover. Implicated with other RNA-binding proteins in the cytoplasmic deadenylation/translational and decay interplay of the FOS mRNA mediated by the major coding-region determinant of instability (mCRD) domain. Involved in regulation of nonsense-mediated decay (NMD) of mRNAs containing premature stop codons; for the recognition of premature termination codons (PTC) and initiation of NMD a competitive interaction between UPF1 and PABPC1 with the ribosome-bound release factors is proposed. By binding to long poly(A) tails, may protect them from uridylation by ZCCHC6/ZCCHC11 and hence contribute to mRNA stability. This chain is Polyadenylate-binding protein 1 (PABPC1), found in Pongo abelii (Sumatran orangutan).